Here is a 634-residue protein sequence, read N- to C-terminus: DNA-directed RNA polymerase subunit gamma (634 aa).

Positions 74, 76, 89, and 92 each coordinate Zn(2+). 3 residues coordinate Mg(2+): D471, D473, and D475.

This sequence belongs to the RNA polymerase beta' chain family. RpoC1 subfamily. As to quaternary structure, in cyanobacteria the RNAP catalytic core is composed of 2 alpha, 1 beta, 1 beta', 1 gamma and 1 omega subunit. When a sigma factor is associated with the core the holoenzyme is formed, which can initiate transcription. It depends on Mg(2+) as a cofactor. The cofactor is Zn(2+).

It catalyses the reaction RNA(n) + a ribonucleoside 5'-triphosphate = RNA(n+1) + diphosphate. DNA-dependent RNA polymerase catalyzes the transcription of DNA into RNA using the four ribonucleoside triphosphates as substrates. This chain is DNA-directed RNA polymerase subunit gamma, found in Synechococcus sp. (strain CC9902).